Here is a 199-residue protein sequence, read N- to C-terminus: Hematopoietic prostaglandin D synthase (199 aa).

In terms of domain architecture, GST N-terminal spans 2-79 (PNYKLTYFNL…YLARESGLAG (78 aa)). Glutathione contacts are provided by residues Y8, R14, W39, 49-51 (GKV), and 63-64 (QS). Residues 81 to 199 (TPVEQALADA…WIQKRPKTAI (119 aa)) form the GST C-terminal domain.

The protein belongs to the GST superfamily. Sigma family. It depends on glutathione as a cofactor. Highly expressed in liver, kidney, small intestine and colon, moderately in pancreas, bone marrow, lung and ovary, and expressed at low levels in spleen, thymus, heart and brain. Not detected in oviduct or skin (at protein level). Expressed in liver.

It is found in the cytoplasm. The enzyme catalyses prostaglandin H2 = prostaglandin D2. It carries out the reaction RX + glutathione = an S-substituted glutathione + a halide anion + H(+). The catalysed reaction is 2-glyceryl-prostaglandin H2 = 2-glyceryl-prostaglandin D2. Bifunctional enzyme which catalyzes both the conversion of PGH2 to PGD2, a prostaglandin involved in smooth muscle contraction/relaxation and a potent inhibitor of platelet aggregation, and the conjugation of glutathione with a wide range of aryl halides, organic isothiocyanates and alpha,beta-unsaturated carbonyls. Also exhibits low glutathione-peroxidase activity towards cumene hydroperoxide and t-butyl hydroperoxide. The chain is Hematopoietic prostaglandin D synthase (HPGDS) from Gallus gallus (Chicken).